The primary structure comprises 92 residues: UPF0223 protein SGO_1052 (92 aa).

Belongs to the UPF0223 family.

The protein is UPF0223 protein SGO_1052 of Streptococcus gordonii (strain Challis / ATCC 35105 / BCRC 15272 / CH1 / DL1 / V288).